Consider the following 242-residue polypeptide: Ubiquitin-conjugating enzyme E2 6 (242 aa).

Residues 1 to 217 (MASRQAYKRL…QPAGNGTTSN (217 aa)) are Cytoplasmic-facing. In terms of domain architecture, UBC core spans 5–163 (QAYKRLSKEY…FPELAEQNRR (159 aa)). The active-site Glycyl thioester intermediate is the Cys87. A helical transmembrane segment spans residues 218–240 (SIGRSLLFVLFSLAALLVAVCYT).

The protein belongs to the ubiquitin-conjugating enzyme family.

It is found in the endoplasmic reticulum membrane. The enzyme catalyses S-ubiquitinyl-[E1 ubiquitin-activating enzyme]-L-cysteine + [E2 ubiquitin-conjugating enzyme]-L-cysteine = [E1 ubiquitin-activating enzyme]-L-cysteine + S-ubiquitinyl-[E2 ubiquitin-conjugating enzyme]-L-cysteine.. The protein operates within protein modification; protein ubiquitination. Its function is as follows. Catalyzes the covalent attachment of ubiquitin to other proteins. Functions in degradation of misfolded or regulated proteins localized in the endoplasmic reticulum (ER) lumen or membrane via the ubiquitin-proteasome system. Cognate E2 conjugating enzyme for the DOA10 ubiquitin ligase complex, which is part of the ERAD-C pathway responsible for the rapid degradation of membrane proteins with misfolded cytoplasmic domains. This Eremothecium gossypii (strain ATCC 10895 / CBS 109.51 / FGSC 9923 / NRRL Y-1056) (Yeast) protein is Ubiquitin-conjugating enzyme E2 6 (UBC6).